A 291-amino-acid chain; its full sequence is N-acetylmannosamine kinase (291 aa).

ATP-binding positions include 5–12 and 132–139; these read AIDIGGTK and GVGGGVVS. Zn(2+) contacts are provided by histidine 156, cysteine 166, cysteine 168, and cysteine 173.

This sequence belongs to the ROK (NagC/XylR) family. NanK subfamily. Homodimer.

It catalyses the reaction an N-acyl-D-mannosamine + ATP = an N-acyl-D-mannosamine 6-phosphate + ADP + H(+). It functions in the pathway amino-sugar metabolism; N-acetylneuraminate degradation; D-fructose 6-phosphate from N-acetylneuraminate: step 2/5. Functionally, catalyzes the phosphorylation of N-acetylmannosamine (ManNAc) to ManNAc-6-P. The protein is N-acetylmannosamine kinase of Escherichia coli O1:K1 / APEC.